A 359-amino-acid chain; its full sequence is 3-dehydroquinate synthase (359 aa).

NAD(+) is bound by residues 69-74 (DGEQHK), 103-107 (GVIGD), 127-128 (TT), K140, K149, and 167-170 (TLDT). Positions 182, 245, and 262 each coordinate Zn(2+).

Belongs to the sugar phosphate cyclases superfamily. Dehydroquinate synthase family. Co(2+) is required as a cofactor. Zn(2+) serves as cofactor. Requires NAD(+) as cofactor.

The protein resides in the cytoplasm. The enzyme catalyses 7-phospho-2-dehydro-3-deoxy-D-arabino-heptonate = 3-dehydroquinate + phosphate. Its pathway is metabolic intermediate biosynthesis; chorismate biosynthesis; chorismate from D-erythrose 4-phosphate and phosphoenolpyruvate: step 2/7. Catalyzes the conversion of 3-deoxy-D-arabino-heptulosonate 7-phosphate (DAHP) to dehydroquinate (DHQ). This Nitrosococcus oceani (strain ATCC 19707 / BCRC 17464 / JCM 30415 / NCIMB 11848 / C-107) protein is 3-dehydroquinate synthase.